Consider the following 425-residue polypeptide: Alpha/beta hydrolase xenA (425 aa).

Residue Asp-366 is part of the active site.

It belongs to the AB hydrolase superfamily. FUS2 hydrolase family. In terms of assembly, homodimer.

The protein operates within mycotoxin biosynthesis. In terms of biological role, alpha/beta hydrolase; part of the gene cluster that mediates the biosynthesis of xenoacremones such as xenoacremone A, a compound that shows inhibitory activity toward the PI3K/AKT signaling pathway and which has the ability to induce apoptosis of A549 lung cancer cells. Within the pathway, cooperation of the hybrid PKS-NRPS xenE and the trans-acting enoyl reductase xenG is responsible for the formation of the reduced tyrosine-nonaketide derivative. The alpha/beta hydrolase xenA then accelerates intramolecular nucleophilic attack to give a pyrrolidone derivative. Subsequently, three enzymes, xenF, xenD, and xenC, coordinately participate in the conversion to xenoacremone B. XenF catalyzes sigmatropic rearrangement to form an A-ring, which leads to an unusual intermediate with a hexane ring, which is required for the formation of the tricarbocyclic product. Epoxidation catalyzed by xenD and the formation of the paracyclophane ether catalyzed by xenC initiate a spontaneous intramolecular Diels-Alder (IMDA) reaction to yield xenoacremone B. Spontaneous hydration of xenoacremone B leads to the formation of xenoacremone A, which undergoes subsequent methylation to afford xenoacremone C. The sequence is that of Alpha/beta hydrolase xenA from Xenoacremonium sinensis (Endophyte fungus).